The primary structure comprises 361 residues: Biotin synthase (361 aa).

The 226-residue stretch at 83–308 folds into the Radical SAM core domain; the sequence is PEVEVEGIIS…RTILRYAGGR (226 aa). The [4Fe-4S] cluster site is built by cysteine 98, cysteine 102, and cysteine 105. [2Fe-2S] cluster-binding residues include cysteine 141, cysteine 174, cysteine 233, and arginine 303.

Belongs to the radical SAM superfamily. Biotin synthase family. In terms of assembly, homodimer. Requires [4Fe-4S] cluster as cofactor. It depends on [2Fe-2S] cluster as a cofactor.

The catalysed reaction is (4R,5S)-dethiobiotin + (sulfur carrier)-SH + 2 reduced [2Fe-2S]-[ferredoxin] + 2 S-adenosyl-L-methionine = (sulfur carrier)-H + biotin + 2 5'-deoxyadenosine + 2 L-methionine + 2 oxidized [2Fe-2S]-[ferredoxin]. The protein operates within cofactor biosynthesis; biotin biosynthesis; biotin from 7,8-diaminononanoate: step 2/2. Catalyzes the conversion of dethiobiotin (DTB) to biotin by the insertion of a sulfur atom into dethiobiotin via a radical-based mechanism. This Parafrankia sp. (strain EAN1pec) protein is Biotin synthase.